The following is a 394-amino-acid chain: Elongation factor Tu (394 aa).

The region spanning 10–204 is the tr-type G domain; sequence KPHLNVGTIG…ALDTYIPLPE (195 aa). The segment at 19–26 is G1; it reads GHVDHGKT. 19–26 contributes to the GTP binding site; sequence GHVDHGKT. T26 lines the Mg(2+) pocket. Residues 60-64 form a G2 region; that stretch reads GITIN. Positions 81 to 84 are G3; that stretch reads DCPG. Residues 81-85 and 136-139 contribute to the GTP site; these read DCPGH and NKCD. The interval 136–139 is G4; that stretch reads NKCD. Residues 174 to 176 form a G5 region; the sequence is SAL.

Belongs to the TRAFAC class translation factor GTPase superfamily. Classic translation factor GTPase family. EF-Tu/EF-1A subfamily. In terms of assembly, monomer.

The protein localises to the cytoplasm. It catalyses the reaction GTP + H2O = GDP + phosphate + H(+). GTP hydrolase that promotes the GTP-dependent binding of aminoacyl-tRNA to the A-site of ribosomes during protein biosynthesis. The sequence is that of Elongation factor Tu from Psychromonas ingrahamii (strain DSM 17664 / CCUG 51855 / 37).